The primary structure comprises 415 residues: Methylthioribose-1-phosphate isomerase (415 aa).

Aspartate 284 serves as the catalytic Proton donor.

Belongs to the eIF-2B alpha/beta/delta subunits family. MtnA subfamily.

The protein resides in the cytoplasm. The protein localises to the nucleus. The catalysed reaction is 5-(methylsulfanyl)-alpha-D-ribose 1-phosphate = 5-(methylsulfanyl)-D-ribulose 1-phosphate. Its pathway is amino-acid biosynthesis; L-methionine biosynthesis via salvage pathway; L-methionine from S-methyl-5-thio-alpha-D-ribose 1-phosphate: step 1/6. Catalyzes the interconversion of methylthioribose-1-phosphate (MTR-1-P) into methylthioribulose-1-phosphate (MTRu-1-P). In Candida glabrata (strain ATCC 2001 / BCRC 20586 / JCM 3761 / NBRC 0622 / NRRL Y-65 / CBS 138) (Yeast), this protein is Methylthioribose-1-phosphate isomerase.